The primary structure comprises 361 residues: Endo-1,4-beta-xylanase 2 (361 aa).

An N-terminal signal peptide occupies residues 1–26 (MHFSTITAALALLGLGAATPTDYSTS). A GH10 domain is found at 46–354 (IGTALTIRDD…KPAYSSVLKT (309 aa)). 2 N-linked (GlcNAc...) asparagine glycosylation sites follow: Asn88 and Asn130. Glu160 (proton donor) is an active-site residue. Glu276 serves as the catalytic Nucleophile. Cys304 and Cys310 are disulfide-bonded.

The protein belongs to the glycosyl hydrolase 10 (cellulase F) family.

It is found in the secreted. The catalysed reaction is Endohydrolysis of (1-&gt;4)-beta-D-xylosidic linkages in xylans.. It participates in glycan degradation; xylan degradation. Functionally, endo-1,4-beta-xylanase involved in the hydrolysis of xylan, a major structural heterogeneous polysaccharide found in plant biomass representing the second most abundant polysaccharide in the biosphere, after cellulose. Hydrolyzes birch-wood xylan, with a similar activity toward oat-spelt xylan. Also shows weak activities toward pNP-beta-D-cellobioside and pNP-beta-D-xylopyranoside, but no detectable activity toward carboxymethyl cellulose and pNP-beta-L-arabinofuranoside.-. This is Endo-1,4-beta-xylanase 2 (xynII) from Aureobasidium pullulans (Black yeast).